Here is a 591-residue protein sequence, read N- to C-terminus: Aspartate--tRNA(Asp/Asn) ligase (591 aa).

Glu-176 lines the L-aspartate pocket. The aspartate stretch occupies residues 200 to 203 (QLFK). An L-aspartate-binding site is contributed by Arg-222. ATP-binding positions include 222–224 (RDE) and Gln-231. Residue His-450 coordinates L-aspartate. An ATP-binding site is contributed by Glu-484. Arg-491 serves as a coordination point for L-aspartate. ATP is bound at residue 536–539 (GLDR).

This sequence belongs to the class-II aminoacyl-tRNA synthetase family. Type 1 subfamily. In terms of assembly, homodimer.

The protein localises to the cytoplasm. The catalysed reaction is tRNA(Asx) + L-aspartate + ATP = L-aspartyl-tRNA(Asx) + AMP + diphosphate. Its function is as follows. Aspartyl-tRNA synthetase with relaxed tRNA specificity since it is able to aspartylate not only its cognate tRNA(Asp) but also tRNA(Asn). Reaction proceeds in two steps: L-aspartate is first activated by ATP to form Asp-AMP and then transferred to the acceptor end of tRNA(Asp/Asn). The protein is Aspartate--tRNA(Asp/Asn) ligase of Bacillus cereus (strain AH187).